The following is a 186-amino-acid chain: Large ribosomal subunit protein eL18B (186 aa).

At lysine 50 the chain carries N6,N6,N6-trimethyllysine. Lysine 116 participates in a covalent cross-link: Glycyl lysine isopeptide (Lys-Gly) (interchain with G-Cter in ubiquitin).

Belongs to the eukaryotic ribosomal protein eL18 family. As to quaternary structure, component of the large ribosomal subunit (LSU). Mature yeast ribosomes consist of a small (40S) and a large (60S) subunit. The 40S small subunit contains 1 molecule of ribosomal RNA (18S rRNA) and 33 different proteins (encoded by 57 genes). The large 60S subunit contains 3 rRNA molecules (25S, 5.8S and 5S rRNA) and 46 different proteins (encoded by 81 genes). eL18 interacts with NAP1.

It is found in the cytoplasm. In terms of biological role, component of the ribosome, a large ribonucleoprotein complex responsible for the synthesis of proteins in the cell. The small ribosomal subunit (SSU) binds messenger RNAs (mRNAs) and translates the encoded message by selecting cognate aminoacyl-transfer RNA (tRNA) molecules. The large subunit (LSU) contains the ribosomal catalytic site termed the peptidyl transferase center (PTC), which catalyzes the formation of peptide bonds, thereby polymerizing the amino acids delivered by tRNAs into a polypeptide chain. The nascent polypeptides leave the ribosome through a tunnel in the LSU and interact with protein factors that function in enzymatic processing, targeting, and the membrane insertion of nascent chains at the exit of the ribosomal tunnel. The sequence is that of Large ribosomal subunit protein eL18B from Saccharomyces cerevisiae (strain ATCC 204508 / S288c) (Baker's yeast).